The primary structure comprises 202 residues: UPF0056 membrane protein PH0214 (202 aa).

The next 6 helical transmembrane spans lie at 5–25 (ILSSALLMLIMIDPSDKILLV), 47–67 (IGFILLLLFAVAGKIILQDIF), 76–96 (VAGGFVLFKIGLEALEGGGMV), 104–124 (ILALAAVPVATPLIAGPAAIT), 135–155 (IIVSIVGTLIAIAITAALMMI), and 174–194 (IIGLFIMAIGAQMMITGAGGI).

Belongs to the UPF0056 (MarC) family.

Its subcellular location is the cell membrane. In Pyrococcus horikoshii (strain ATCC 700860 / DSM 12428 / JCM 9974 / NBRC 100139 / OT-3), this protein is UPF0056 membrane protein PH0214.